The chain runs to 214 residues: UPF0725 protein At1g19565 (214 aa).

The tract at residues 56–92 (EEEYEPSLPSSESPTDSCHADHESPDSPKYQQPAPGE) is disordered.

The protein belongs to the UPF0725 (EMB2204) family.

The protein is UPF0725 protein At1g19565 of Arabidopsis thaliana (Mouse-ear cress).